The sequence spans 313 residues: ADP-L-glycero-D-manno-heptose-6-epimerase (313 aa).

Residues 10-11, 31-32, Lys38, Arg53, 75-79, and Asn92 each bind NADP(+); these read MI, DN, and EGACS. Tyr139 (proton acceptor) is an active-site residue. Residue Lys143 participates in NADP(+) binding. Asn174 contributes to the substrate binding site. Residues Val175 and Lys183 each contribute to the NADP(+) site. Lys183 (proton acceptor) is an active-site residue. Residues Ser185, His192, 206–209, Arg214, and Tyr277 each bind substrate; that span reads FAGS.

It belongs to the NAD(P)-dependent epimerase/dehydratase family. HldD subfamily. In terms of assembly, homopentamer. It depends on NADP(+) as a cofactor.

The enzyme catalyses ADP-D-glycero-beta-D-manno-heptose = ADP-L-glycero-beta-D-manno-heptose. It participates in nucleotide-sugar biosynthesis; ADP-L-glycero-beta-D-manno-heptose biosynthesis; ADP-L-glycero-beta-D-manno-heptose from D-glycero-beta-D-manno-heptose 7-phosphate: step 4/4. Its function is as follows. Catalyzes the interconversion between ADP-D-glycero-beta-D-manno-heptose and ADP-L-glycero-beta-D-manno-heptose via an epimerization at carbon 6 of the heptose. This is ADP-L-glycero-D-manno-heptose-6-epimerase from Vibrio campbellii (strain ATCC BAA-1116).